The following is a 308-amino-acid chain: SAP30-binding protein (308 aa).

Positions 15–101 are disordered; sequence AEYSDPESDG…EAEKRDPQEL (87 aa). Phosphoserine occurs at positions 18, 22, 43, and 52. Acidic residues predominate over residues 57–78; sequence DEDGYEEEEDENSKQSEDDDSE. A compositionally biased stretch (basic and acidic residues) spans 79–99; that stretch reads TEKPEADDPKDNTEAEKRDPQ. Residue Lys-95 forms a Glycyl lysine isopeptide (Lys-Gly) (interchain with G-Cter in SUMO2) linkage. Ser-113 carries the post-translational modification Phosphoserine. Glycyl lysine isopeptide (Lys-Gly) (interchain with G-Cter in SUMO2) cross-links involve residues Lys-220, Lys-304, and Lys-305.

This sequence belongs to the HCNGP family. As to quaternary structure, interacts with histone deacetylase complex subunit SAP30.

Its subcellular location is the nucleus. Plays a role in transcriptional repression by promoting histone deacetylase activity, leading to deacetylation of histone H3. May be involved in the regulation of beta-2-microglobulin genes. The protein is SAP30-binding protein (Sap30bp) of Mus musculus (Mouse).